The chain runs to 213 residues: ATP-dependent dethiobiotin synthetase BioD (213 aa).

An ATP-binding site is contributed by 13-18; the sequence is GIGKTV. A Mg(2+)-binding site is contributed by threonine 17. Residue lysine 33 is part of the active site. Glutamate 100 contributes to the Mg(2+) binding site. ATP-binding positions include 100–103 and 184–186; these read EGAG and PRL.

This sequence belongs to the dethiobiotin synthetase family. Homodimer. Mg(2+) serves as cofactor.

It is found in the cytoplasm. The catalysed reaction is (7R,8S)-7,8-diammoniononanoate + CO2 + ATP = (4R,5S)-dethiobiotin + ADP + phosphate + 3 H(+). It functions in the pathway cofactor biosynthesis; biotin biosynthesis; biotin from 7,8-diaminononanoate: step 1/2. Its function is as follows. Catalyzes a mechanistically unusual reaction, the ATP-dependent insertion of CO2 between the N7 and N8 nitrogen atoms of 7,8-diaminopelargonic acid (DAPA, also called 7,8-diammoniononanoate) to form a ureido ring. The polypeptide is ATP-dependent dethiobiotin synthetase BioD (Rhodopseudomonas palustris (strain HaA2)).